Reading from the N-terminus, the 415-residue chain is Adenosylhomocysteinase (415 aa).

Substrate-binding residues include threonine 53, aspartate 124, and glutamate 147. Threonine 148–threonine 150 provides a ligand contact to NAD(+). 2 residues coordinate substrate: lysine 177 and aspartate 181. Residues asparagine 182, glycine 211–glycine 216, glutamate 234, asparagine 269, serine 290–histidine 292, and asparagine 337 contribute to the NAD(+) site.

This sequence belongs to the adenosylhomocysteinase family. Requires NAD(+) as cofactor.

The protein resides in the cytoplasm. It catalyses the reaction S-adenosyl-L-homocysteine + H2O = L-homocysteine + adenosine. It functions in the pathway amino-acid biosynthesis; L-homocysteine biosynthesis; L-homocysteine from S-adenosyl-L-homocysteine: step 1/1. Functionally, may play a key role in the regulation of the intracellular concentration of adenosylhomocysteine. This chain is Adenosylhomocysteinase, found in Sulfolobus acidocaldarius (strain ATCC 33909 / DSM 639 / JCM 8929 / NBRC 15157 / NCIMB 11770).